The sequence spans 494 residues: Membrane-bound lytic murein transglycosylase F 1 (494 aa).

Residues 1–24 form the signal peptide; it reads MRIMAVRLVAGAITLALMAYAWLA. A non-LT domain region spans residues 25–270; that stretch reads WERARDPEPI…TLLEEHFGHL (246 aa). The interval 271–494 is LT domain; the sequence is GRFDYVGFRA…APLPADPPAD (224 aa). Glu-317 is an active-site residue. The segment at 464-494 is disordered; that stretch reads QVPAGEALGEPPLPTPPAPPGAPLPADPPAD. Positions 474 to 494 are enriched in pro residues; that stretch reads PPLPTPPAPPGAPLPADPPAD.

In the N-terminal section; belongs to the bacterial solute-binding protein 3 family. This sequence in the C-terminal section; belongs to the transglycosylase Slt family.

The protein localises to the cell outer membrane. It carries out the reaction Exolytic cleavage of the (1-&gt;4)-beta-glycosidic linkage between N-acetylmuramic acid (MurNAc) and N-acetylglucosamine (GlcNAc) residues in peptidoglycan, from either the reducing or the non-reducing ends of the peptidoglycan chains, with concomitant formation of a 1,6-anhydrobond in the MurNAc residue.. In terms of biological role, murein-degrading enzyme that degrades murein glycan strands and insoluble, high-molecular weight murein sacculi, with the concomitant formation of a 1,6-anhydromuramoyl product. Lytic transglycosylases (LTs) play an integral role in the metabolism of the peptidoglycan (PG) sacculus. Their lytic action creates space within the PG sacculus to allow for its expansion as well as for the insertion of various structures such as secretion systems and flagella. The protein is Membrane-bound lytic murein transglycosylase F 1 of Alkalilimnicola ehrlichii (strain ATCC BAA-1101 / DSM 17681 / MLHE-1).